The following is a 265-amino-acid chain: Translation initiation factor 2 subunit alpha (265 aa).

The region spanning 12–83 (GELIIGTVYK…KKGHVDASLK (72 aa)) is the S1 motif domain.

Belongs to the eIF-2-alpha family. In terms of assembly, heterotrimer composed of an alpha, a beta and a gamma chain.

In terms of biological role, eIF-2 functions in the early steps of protein synthesis by forming a ternary complex with GTP and initiator tRNA. This chain is Translation initiation factor 2 subunit alpha, found in Methanobrevibacter smithii (strain ATCC 35061 / DSM 861 / OCM 144 / PS).